Here is a 141-residue protein sequence, read N- to C-terminus: Lutropin subunit beta (141 aa).

Positions 1 to 20 (MEMFQGLLLWLLLNTGGAWA) are cleaved as a signal peptide. 6 disulfide bridges follow: C29–C77, C43–C92, C46–C130, C54–C108, C58–C110, and C113–C120. An N-linked (GlcNAc...) asparagine glycan is attached at N33.

Belongs to the glycoprotein hormones subunit beta family. In terms of assembly, heterodimer of a common alpha chain and a unique beta chain which confers biological specificity to thyrotropin, lutropin, follitropin and gonadotropin.

The protein localises to the secreted. Functionally, promotes spermatogenesis and ovulation by stimulating the testes and ovaries to synthesize steroids. The chain is Lutropin subunit beta (LHB) from Ailuropoda melanoleuca (Giant panda).